Reading from the N-terminus, the 67-residue chain is Small ribosomal subunit protein bS21 (67 aa).

Belongs to the bacterial ribosomal protein bS21 family.

The protein is Small ribosomal subunit protein bS21 of Magnetococcus marinus (strain ATCC BAA-1437 / JCM 17883 / MC-1).